A 193-amino-acid chain; its full sequence is Pyridoxal 5'-phosphate synthase subunit PdxT (193 aa).

48–50 (GES) provides a ligand contact to L-glutamine. The active-site Nucleophile is Cys80. Residues Arg112 and 140–141 (IR) each bind L-glutamine. Active-site charge relay system residues include His176 and Glu178.

The protein belongs to the glutaminase PdxT/SNO family. In terms of assembly, in the presence of PdxS, forms a dodecamer of heterodimers. Only shows activity in the heterodimer.

The catalysed reaction is aldehydo-D-ribose 5-phosphate + D-glyceraldehyde 3-phosphate + L-glutamine = pyridoxal 5'-phosphate + L-glutamate + phosphate + 3 H2O + H(+). It catalyses the reaction L-glutamine + H2O = L-glutamate + NH4(+). Its pathway is cofactor biosynthesis; pyridoxal 5'-phosphate biosynthesis. Catalyzes the hydrolysis of glutamine to glutamate and ammonia as part of the biosynthesis of pyridoxal 5'-phosphate. The resulting ammonia molecule is channeled to the active site of PdxS. The chain is Pyridoxal 5'-phosphate synthase subunit PdxT from Mycolicibacterium smegmatis (strain ATCC 700084 / mc(2)155) (Mycobacterium smegmatis).